The sequence spans 305 residues: tRNA pseudouridine synthase B (305 aa).

The active-site Nucleophile is the D48.

It belongs to the pseudouridine synthase TruB family. Type 1 subfamily.

The catalysed reaction is uridine(55) in tRNA = pseudouridine(55) in tRNA. In terms of biological role, responsible for synthesis of pseudouridine from uracil-55 in the psi GC loop of transfer RNAs. The protein is tRNA pseudouridine synthase B of Pseudomonas putida (strain ATCC 700007 / DSM 6899 / JCM 31910 / BCRC 17059 / LMG 24140 / F1).